A 74-amino-acid polypeptide reads, in one-letter code: RNA-binding protein Hfq (74 aa).

Positions D9–V69 constitute a Sm domain.

The protein belongs to the Hfq family. In terms of assembly, homohexamer.

Its function is as follows. RNA chaperone that binds small regulatory RNA (sRNAs) and mRNAs to facilitate mRNA translational regulation in response to envelope stress, environmental stress and changes in metabolite concentrations. Also binds with high specificity to tRNAs. This Bacillus cytotoxicus (strain DSM 22905 / CIP 110041 / 391-98 / NVH 391-98) protein is RNA-binding protein Hfq.